Reading from the N-terminus, the 161-residue chain is Small ribosomal subunit protein uS9 (161 aa).

This sequence belongs to the universal ribosomal protein uS9 family.

This is Small ribosomal subunit protein uS9 from Methylobacterium radiotolerans (strain ATCC 27329 / DSM 1819 / JCM 2831 / NBRC 15690 / NCIMB 10815 / 0-1).